The chain runs to 297 residues: Phosphatidylglycerol--prolipoprotein diacylglyceryl transferase (297 aa).

Transmembrane regions (helical) follow at residues 17-37 (LAVR…IVVG), 59-79 (MLFY…VLFY), and 97-117 (GGMS…LFAW). R142 provides a ligand contact to a 1,2-diacyl-sn-glycero-3-phospho-(1'-sn-glycerol). 2 helical membrane-spanning segments follow: residues 230-250 (MGAV…TVEF) and 257-277 (FLGL…PMIV).

This sequence belongs to the Lgt family.

It is found in the cell inner membrane. It carries out the reaction L-cysteinyl-[prolipoprotein] + a 1,2-diacyl-sn-glycero-3-phospho-(1'-sn-glycerol) = an S-1,2-diacyl-sn-glyceryl-L-cysteinyl-[prolipoprotein] + sn-glycerol 1-phosphate + H(+). The protein operates within protein modification; lipoprotein biosynthesis (diacylglyceryl transfer). Its function is as follows. Catalyzes the transfer of the diacylglyceryl group from phosphatidylglycerol to the sulfhydryl group of the N-terminal cysteine of a prolipoprotein, the first step in the formation of mature lipoproteins. This Burkholderia multivorans (strain ATCC 17616 / 249) protein is Phosphatidylglycerol--prolipoprotein diacylglyceryl transferase.